A 725-amino-acid chain; its full sequence is Non-structural protein 4 (725 aa).

Disordered stretches follow at residues 1–26 (MSKG…GNRN) and 666–725 (DEVE…TKDE). Positions 7-16 (TVTSLVSGPP) are enriched in polar residues. Positions 675 to 686 (ENQKQELDAKSD) are enriched in basic and acidic residues. A compositionally biased stretch (acidic residues) spans 687–709 (DVEESSVEGEEDDDGSSASEETD).

The sequence is that of Non-structural protein 4 from Rice gall dwarf virus (RGDV).